We begin with the raw amino-acid sequence, 693 residues long: Phosphoribosylformylglycinamidine synthase subunit PurL (693 aa).

Residue His34 is part of the active site. The ATP site is built by Tyr37 and Lys76. Glu78 provides a ligand contact to Mg(2+). Substrate is bound by residues 79–82 (SHNH) and Arg101. His80 serves as the catalytic Proton acceptor. Asp102 is a binding site for Mg(2+). Gln222 is a binding site for substrate. Asp248 serves as a coordination point for Mg(2+). Position 292–294 (292–294 (ETQ)) interacts with substrate. Residues Asp470 and Gly507 each coordinate ATP. Ser510 lines the substrate pocket.

Belongs to the FGAMS family. Monomer. Part of the FGAM synthase complex composed of 1 PurL, 1 PurQ and 2 PurS subunits.

It is found in the cytoplasm. It carries out the reaction N(2)-formyl-N(1)-(5-phospho-beta-D-ribosyl)glycinamide + L-glutamine + ATP + H2O = 2-formamido-N(1)-(5-O-phospho-beta-D-ribosyl)acetamidine + L-glutamate + ADP + phosphate + H(+). The protein operates within purine metabolism; IMP biosynthesis via de novo pathway; 5-amino-1-(5-phospho-D-ribosyl)imidazole from N(2)-formyl-N(1)-(5-phospho-D-ribosyl)glycinamide: step 1/2. In terms of biological role, part of the phosphoribosylformylglycinamidine synthase complex involved in the purines biosynthetic pathway. Catalyzes the ATP-dependent conversion of formylglycinamide ribonucleotide (FGAR) and glutamine to yield formylglycinamidine ribonucleotide (FGAM) and glutamate. The FGAM synthase complex is composed of three subunits. PurQ produces an ammonia molecule by converting glutamine to glutamate. PurL transfers the ammonia molecule to FGAR to form FGAM in an ATP-dependent manner. PurS interacts with PurQ and PurL and is thought to assist in the transfer of the ammonia molecule from PurQ to PurL. The protein is Phosphoribosylformylglycinamidine synthase subunit PurL of Pyrobaculum islandicum (strain DSM 4184 / JCM 9189 / GEO3).